The following is an 83-amino-acid chain: Small ribosomal subunit protein bS16 (83 aa).

Belongs to the bacterial ribosomal protein bS16 family.

This Acidovorax ebreus (strain TPSY) (Diaphorobacter sp. (strain TPSY)) protein is Small ribosomal subunit protein bS16.